A 236-amino-acid polypeptide reads, in one-letter code: uncharacterized protein (236 aa).

The tract at residues 1-73 (MEPGGSENAA…GGGWGWGNTQ (73 aa)) is disordered.

This is an uncharacterized protein from Homo sapiens (Human).